The primary structure comprises 677 residues: Penicillin-binding protein activator LpoA (677 aa).

An N-terminal signal peptide occupies residues 1–26 (MLPSKIVRHKAGRFVPVLLAGLILAA). Cys27 carries the N-palmitoyl cysteine lipid modification. Residue Cys27 is the site of S-diacylglycerol cysteine attachment. The segment at 309-359 (QPADANAVVSPSANPAAAQQSGTAQQPATTQQQPQQQPAAEPASNAQVKVY) is disordered. Low complexity predominate over residues 313–355 (ANAVVSPSANPAAAQQSGTAQQPATTQQQPQQQPAAEPASNAQ).

Belongs to the LpoA family. In terms of assembly, interacts with PBP1a.

The protein resides in the cell outer membrane. Regulator of peptidoglycan synthesis that is essential for the function of penicillin-binding protein 1A (PBP1a). This is Penicillin-binding protein activator LpoA from Pantoea ananatis (strain LMG 20103).